The chain runs to 190 residues: Guanylate kinase (190 aa).

The Guanylate kinase-like domain occupies 3 to 185 (NYIFIISAPS…SLEQLCKYFE (183 aa)). Position 10–17 (10–17 (APSGAGKS)) interacts with ATP.

The protein belongs to the guanylate kinase family.

The protein resides in the cytoplasm. It catalyses the reaction GMP + ATP = GDP + ADP. Its function is as follows. Essential for recycling GMP and indirectly, cGMP. In Francisella tularensis subsp. holarctica (strain OSU18), this protein is Guanylate kinase.